The sequence spans 166 residues: Transmembrane protein 278 (166 aa).

Residues 1–15 (MSDQERETEEDEGGD) show a composition bias toward acidic residues. The disordered stretch occupies residues 1 to 28 (MSDQERETEEDEGGDPSDTAPMLPQRLP). 3 helical membrane-spanning segments follow: residues 39–59 (GWASLAARGLGTLLFQGWALA), 65–85 (LLLPAAVFLLVLLPAAAVVYL), and 111–131 (AAVIVLGFLSLPPLLVLASAA).

It belongs to the TMEM88 family.

The protein localises to the membrane. The chain is Transmembrane protein 278 (TMEM278) from Bos taurus (Bovine).